A 1283-amino-acid polypeptide reads, in one-letter code: MSLMVSAGRGLGAVWSPTHVQVTVLQARGLRAKGPGGTSDAYAVIQVGKEKYATSVSERSLGAPVWREEATFELPSLLSSGPAAAATLQLTVLHRALLGLDKFLGRAEVDLRDLHRDQGRRKTQWYKLKSKPGKKDKERGEIEVDIQFMRNNMTASMFDLSMKDKSRNPFGKLKDKIKGKNKDSGSDTASAIIPSTTPSVDSDDESVVKDKKKKSKIKTLLSKSNLQKTPLSQSMSVLPTSKPEKVLLRPGDFQSQWDEDDNEDESSSASDVMSHKRTASTDLKQLNQVNFTLPKKEGLSFLGGLRSKNDVLSRSNVCINGNHVYLEQPEAKGEIKDSSPSSSPSPKGFRKKHLFSSTENLAAGSWKEPAEGGGLSSDRQLSESSTKDSLKSMTLPSYRPAPLVSGDLRENMAPANSEATKEAKESKKPESRRSSLLSLMTGKKDVAKGSEGENPLTVPGREKEGMLMGVKPGEDASGPAEDLVRRSEKDTAAVVSRQGSSLNLFEDVQITEPEAEPESKSEPRPPISSPRAPQTRAVKPRLEVSPEAQPTARLPSPTDSPSSLPPLPSSSGQASVPSELGHGADTQSSESPSVFSSLSSPIAAPISTSTPIESWPLVDRGQAKSEGPPLLPKAELQTESLTPVPNSGSSALGSLFKQPSFPANKGTEDSLMGRTRETGTEKNTSSLELEESLPEQPETGRQEEELPRFPCKKQDYSPSSGEAQEVPFALSLSSDGAVSPVGELAAGGDRDLESQAGSLVESKARDAAEEVAPPLPMGASVPSIDSMMRKLEEMGLNLRKDQKKTKKRVSFSEQLFTEEAVAGAALLVEGHSSCPQELNPAWSVAGNASDGEPPESPHAEDSERESVTTPGPATCGAPASPADHLLLPSQEESFSEVPMSEASSAKDTPLFRMEGEDALVTQYQSKASDHEGLLSDPLSDLQLVSDFKSPIMADLNLSLPSIPEVASDDERIDQVEDDGDQVEDDGETAKSSTLDIGALSLGLVVPCPERGKGPSGEADRLVLGEGLCDFRLQAPQASVTAPSEQTTEFGIHKPHLGKSSSLDKQLPGPSGGEEEKPMGNGSPSPPPGTSLDNPVPSPSPSEIFPVTHSFPSSAHSDTHHTSTAESQKKATAEGSAGRVENFGKRKPLLQAWVSPSETHPVSAQPGAGTGSAKHRLHPVKPMNAMATKVANCSLGTATIISENLNNEVMMKKYSPSDPAFAYAQLTHDELIQLVLKQKETISKKEFQVRELEDYIDNLLVRVMEETPNILRIPTQVGKKAGKM.

The region spanning 1–126 is the C2 domain; the sequence is MSLMVSAGRG…DQGRRKTQWY (126 aa). Basic and acidic residues predominate over residues 161–185; it reads SMKDKSRNPFGKLKDKIKGKNKDSG. The disordered stretch occupies residues 161-281; that stretch reads SMKDKSRNPF…VMSHKRTAST (121 aa). A phosphoserine mark is found at serine 184, serine 202, serine 206, and serine 234. The segment covering 225-239 has biased composition (polar residues); the sequence is NLQKTPLSQSMSVLP. Acidic residues predominate over residues 257–266; it reads WDEDDNEDES. Residues serine 300, serine 315, serine 339, serine 341, serine 343, serine 345, serine 356, serine 357, and serine 382 each carry the phosphoserine modification. 5 disordered regions span residues 330-727, 741-782, 835-913, 969-993, and 1037-1141; these read EAKG…QEVP, VGEL…ASVP, PQEL…LFRM, DERIDQVEDDGDQVEDDGETAKSST, and ASVT…RVEN. Over residues 419–433 the composition is skewed to basic and acidic residues; sequence ATKEAKESKKPESRR. Serine 435 is subject to Phosphoserine. Residues 442-451 show a composition bias toward basic and acidic residues; the sequence is GKKDVAKGSE. Serine 477 carries the phosphoserine modification. Residues 482-491 show a composition bias toward basic and acidic residues; that stretch reads DLVRRSEKDT. Residues serine 529 and serine 545 each carry the phosphoserine modification. A compositionally biased stretch (low complexity) spans 588 to 612; that stretch reads SSESPSVFSSLSSPIAAPISTSTPI. Over residues 637-652 the composition is skewed to polar residues; that stretch reads QTESLTPVPNSGSSAL. Residues 698–715 show a composition bias toward basic and acidic residues; the sequence is ETGRQEEELPRFPCKKQD. Serine 758 is modified (phosphoserine). The segment covering 855 to 866 has biased composition (basic and acidic residues); the sequence is ESPHAEDSERES. Positions 975 to 986 are enriched in acidic residues; the sequence is VEDDGDQVEDDG. Polar residues predominate over residues 1037 to 1048; it reads ASVTAPSEQTTE. Basic and acidic residues predominate over residues 1116–1131; sequence SDTHHTSTAESQKKAT. The residue at position 1135 (serine 1135) is a Phosphoserine. Residues 1211–1273 form the FIP-RBD domain; sequence KKYSPSDPAF…EETPNILRIP (63 aa). The segment at 1219-1283 is necessary for interaction with RAB4A and RAB11A, subcellular location and endosomal recycling; that stretch reads AFAYAQLTHD…TQVGKKAGKM (65 aa).

Interacts with RAB11A (GTP-bound form); the interaction induces RAB11FIP1 recruitment to membranes. Interacts with RAB14 (GTP-bound form). In terms of assembly, homooligomer. Isoform 2 interacts with RAB4A, RAB11A, RAB11B and RAB25. According to PubMed:15280022, RAB4A binding to RAB11FIP1 is of very low affinity in vitro and in vivo. As to expression, isoform 2 is expressed in brain, heart, testis, lung, spleen, ovary and small intestine.

It is found in the recycling endosome. The protein resides in the cytoplasmic vesicle. It localises to the phagosome membrane. Its function is as follows. A Rab11 effector protein involved in the endosomal recycling process. Also involved in controlling membrane trafficking along the phagocytic pathway and in phagocytosis. Interaction with RAB14 may function in the process of neurite formation. The polypeptide is Rab11 family-interacting protein 1 (Homo sapiens (Human)).